Here is a 418-residue protein sequence, read N- to C-terminus: Tyrosine--tRNA ligase (418 aa).

Residue Tyr-34 participates in L-tyrosine binding. A 'HIGH' region motif is present at residues 39 to 48 (PTADSLHLGH). Tyr-169 and Gln-173 together coordinate L-tyrosine. The 'KMSKS' region signature appears at 229 to 233 (KFGKS). Residue Lys-232 coordinates ATP. The S4 RNA-binding domain occupies 352–418 (LNLVDMLVTA…GKKKYAVLTY (67 aa)).

This sequence belongs to the class-I aminoacyl-tRNA synthetase family. TyrS type 1 subfamily. As to quaternary structure, homodimer.

The protein localises to the cytoplasm. The catalysed reaction is tRNA(Tyr) + L-tyrosine + ATP = L-tyrosyl-tRNA(Tyr) + AMP + diphosphate + H(+). Functionally, catalyzes the attachment of tyrosine to tRNA(Tyr) in a two-step reaction: tyrosine is first activated by ATP to form Tyr-AMP and then transferred to the acceptor end of tRNA(Tyr). The chain is Tyrosine--tRNA ligase from Streptococcus pyogenes serotype M3 (strain SSI-1).